A 386-amino-acid chain; its full sequence is MKIHEYQGKELLKQFGVPVPRGIPAFSVEEAVAAAEKLGGPVWVVKAQIHAGGRGKGGGVKLARSLDEVRQLASQILGMQLVTHQTGAQGQKVNRLYIEDGADIQKEYYVSLVTDRGTQKVALIASSEGGMDIEEVAHSTPEKIITEYIDPIVGLTDAQAKKVADAIGMPADSTAQAVDVFKKLYQCYMDTDASLVEINPLNRDSKGNIIALDAKFNFDSNALFRHPEIVAYRDLDEEDPAEIEASKFDLAYIQLDGNIGCLVNGAGLAMATMDTIKLFGGEPANFLDVGGGATAEKVTEAFKIMLKNKGVKAILVNIFGGIMRCDVIAEGVISACKAVNLSVPLVVRMKGTNEELGKKMLAESGLPIISADTMAEAATKVVAAAK.

Residues 9 to 244 (KELLKQFGVP…LDEEDPAEIE (236 aa)) enclose the ATP-grasp domain. ATP-binding positions include Lys46, 53–55 (GRG), Glu99, Ala102, and Glu107. Residues Asn199 and Asp213 each contribute to the Mg(2+) site. Substrate is bound by residues Asn264 and 321 to 323 (GIM).

The protein belongs to the succinate/malate CoA ligase beta subunit family. As to quaternary structure, heterotetramer of two alpha and two beta subunits. Requires Mg(2+) as cofactor.

The catalysed reaction is succinate + ATP + CoA = succinyl-CoA + ADP + phosphate. The enzyme catalyses GTP + succinate + CoA = succinyl-CoA + GDP + phosphate. Its pathway is carbohydrate metabolism; tricarboxylic acid cycle; succinate from succinyl-CoA (ligase route): step 1/1. Succinyl-CoA synthetase functions in the citric acid cycle (TCA), coupling the hydrolysis of succinyl-CoA to the synthesis of either ATP or GTP and thus represents the only step of substrate-level phosphorylation in the TCA. The beta subunit provides nucleotide specificity of the enzyme and binds the substrate succinate, while the binding sites for coenzyme A and phosphate are found in the alpha subunit. This chain is Succinate--CoA ligase [ADP-forming] subunit beta, found in Bordetella avium (strain 197N).